The chain runs to 470 residues: 24-hydroxycholesterol 7-alpha-hydroxylase (470 aa).

The next 2 helical transmembrane spans lie at 3–23 (IMELFSPIAIAVLGSCVLFLF) and 270–290 (VVLWAALANAPPIAFWTLGYI). Position 415 (cysteine 415) interacts with heme.

It belongs to the cytochrome P450 family. Requires heme as cofactor. Liver specific. Hepatic expression is sexually dimorphic (female &gt; male).

The protein localises to the endoplasmic reticulum membrane. It localises to the microsome membrane. It catalyses the reaction (24S)-hydroxycholesterol + reduced [NADPH--hemoprotein reductase] + O2 = (24S)-7alpha-dihydroxycholesterol + oxidized [NADPH--hemoprotein reductase] + H2O + H(+). It participates in steroid metabolism; cholesterol degradation. It functions in the pathway lipid metabolism; bile acid biosynthesis. A cytochrome P450 monooxygenase involved in neural cholesterol clearance through bile acid synthesis. Catalyzes 7-alpha hydroxylation of (24S)-hydroxycholesterol, a neural oxysterol that is metabolized to bile acids in the liver. Mechanistically, uses molecular oxygen inserting one oxygen atom into a substrate, and reducing the second into a water molecule, with two electrons provided by NADPH via cytochrome P450 reductase (CPR; NADPH-ferrihemoprotein reductase). The protein is 24-hydroxycholesterol 7-alpha-hydroxylase (Cyp39a1) of Mus musculus (Mouse).